The following is a 239-amino-acid chain: Ribosomal RNA small subunit methyltransferase G (239 aa).

Residues glycine 77, phenylalanine 82, 128–129, and arginine 147 contribute to the S-adenosyl-L-methionine site; that span reads AE.

It belongs to the methyltransferase superfamily. RNA methyltransferase RsmG family.

It is found in the cytoplasm. In terms of biological role, specifically methylates the N7 position of guanine in position 535 of 16S rRNA. The chain is Ribosomal RNA small subunit methyltransferase G from Bacillus cereus (strain AH187).